The following is a 686-amino-acid chain: Methionine--tRNA ligase (686 aa).

The 'HIGH' region motif lies at 15 to 25 (PYANGSIHLGH). Residues cysteine 146, cysteine 149, cysteine 159, and cysteine 162 each coordinate Zn(2+). Residues 332 to 336 (KMSKS) carry the 'KMSKS' region motif. Residue lysine 335 participates in ATP binding. The disordered stretch occupies residues 550–571 (AAAEAAAKEKAEAEKEQASQTE). Positions 585–686 (AFSAVDMRIA…EGAQPGMRVM (102 aa)) constitute a tRNA-binding domain.

It belongs to the class-I aminoacyl-tRNA synthetase family. MetG type 1 subfamily. In terms of assembly, homodimer. Zn(2+) serves as cofactor.

It is found in the cytoplasm. The enzyme catalyses tRNA(Met) + L-methionine + ATP = L-methionyl-tRNA(Met) + AMP + diphosphate. In terms of biological role, is required not only for elongation of protein synthesis but also for the initiation of all mRNA translation through initiator tRNA(fMet) aminoacylation. The chain is Methionine--tRNA ligase from Vibrio atlanticus (strain LGP32) (Vibrio splendidus (strain Mel32)).